The sequence spans 1323 residues: Phosphoribosylformylglycinamidine synthase (1323 aa).

ATP is bound by residues 312–323, 391–393, and alanine 691; these read GAATGSGGEIRD and NGY. Residues aspartate 692, glutamate 733, asparagine 737, and aspartate 903 each coordinate Mg(2+). Serine 905 lines the ATP pocket. Residues 1062 to 1306 form the Glutamine amidotransferase type-1 domain; it reads VAILREQGVN…YPHSKASEWG (245 aa). The active-site Nucleophile is the cysteine 1156. Residues histidine 1284 and glutamate 1286 contribute to the active site.

It in the N-terminal section; belongs to the FGAMS family.

The protein resides in the cytoplasm. The catalysed reaction is N(2)-formyl-N(1)-(5-phospho-beta-D-ribosyl)glycinamide + L-glutamine + ATP + H2O = 2-formamido-N(1)-(5-O-phospho-beta-D-ribosyl)acetamidine + L-glutamate + ADP + phosphate + H(+). The protein operates within purine metabolism; IMP biosynthesis via de novo pathway; 5-amino-1-(5-phospho-D-ribosyl)imidazole from N(2)-formyl-N(1)-(5-phospho-D-ribosyl)glycinamide: step 1/2. Its function is as follows. Phosphoribosylformylglycinamidine synthase involved in the purines biosynthetic pathway. Catalyzes the ATP-dependent conversion of formylglycinamide ribonucleotide (FGAR) and glutamine to yield formylglycinamidine ribonucleotide (FGAM) and glutamate. The sequence is that of Phosphoribosylformylglycinamidine synthase (ade3) from Schizosaccharomyces pombe (strain 972 / ATCC 24843) (Fission yeast).